A 590-amino-acid chain; its full sequence is Aspartate--tRNA ligase (590 aa).

Residue E180 participates in L-aspartate binding. The segment at Q204–K207 is aspartate. R226 contributes to the L-aspartate binding site. ATP contacts are provided by residues R226 to E228 and Q235. H454 is a binding site for L-aspartate. ATP is bound at residue E488. L-aspartate is bound at residue R495. Residue G540 to R543 participates in ATP binding.

Belongs to the class-II aminoacyl-tRNA synthetase family. Type 1 subfamily. In terms of assembly, homodimer.

Its subcellular location is the cytoplasm. The catalysed reaction is tRNA(Asp) + L-aspartate + ATP = L-aspartyl-tRNA(Asp) + AMP + diphosphate. Functionally, catalyzes the attachment of L-aspartate to tRNA(Asp) in a two-step reaction: L-aspartate is first activated by ATP to form Asp-AMP and then transferred to the acceptor end of tRNA(Asp). This is Aspartate--tRNA ligase from Clostridium kluyveri (strain NBRC 12016).